Here is a 328-residue protein sequence, read N- to C-terminus: DNA-directed RNA polymerase subunit alpha (328 aa).

Residues 1–232 (MHNSLAELIK…QHLAILVDLK (232 aa)) form an alpha N-terminal domain (alpha-NTD) region. The interval 246-328 (FDPLLLHPVD…PPEGLKKLNQ (83 aa)) is alpha C-terminal domain (alpha-CTD).

Belongs to the RNA polymerase alpha chain family. Homodimer. The RNAP catalytic core consists of 2 alpha, 1 beta, 1 beta' and 1 omega subunit. When a sigma factor is associated with the core the holoenzyme is formed, which can initiate transcription.

It carries out the reaction RNA(n) + a ribonucleoside 5'-triphosphate = RNA(n+1) + diphosphate. In terms of biological role, DNA-dependent RNA polymerase catalyzes the transcription of DNA into RNA using the four ribonucleoside triphosphates as substrates. This chain is DNA-directed RNA polymerase subunit alpha, found in Methylococcus capsulatus (strain ATCC 33009 / NCIMB 11132 / Bath).